A 530-amino-acid polypeptide reads, in one-letter code: TNF receptor-associated factor 6 (530 aa).

The interaction with TAX1BP1 stretch occupies residues 1-362; that stretch reads MSLLNCENSC…EAQQCNGIYI (362 aa). The segment at 70–109 adopts an RING-type zinc-finger fold; sequence CPICLMALREAVQTPCGHRFCKACIIKSIRDAGHKCPVDN. Residue Lys-124 forms a Glycyl lysine isopeptide (Lys-Gly) (interchain with G-Cter in SUMO); alternate linkage. Residue Lys-124 forms a Glycyl lysine isopeptide (Lys-Gly) (interchain with G-Cter in ubiquitin); alternate linkage. A Glycyl lysine isopeptide (Lys-Gly) (interchain with G-Cter in SUMO) cross-link involves residue Lys-142. TRAF-type zinc fingers lie at residues 150–202 and 203–259; these read DHQV…EEKE and IHDQ…NHLA. A coiled-coil region spans residues 299–356; it reads EDPNYEETIKQLESRLVRQDHQIRELTAKMETQSMYVGELKRTIRTLEDKVAEMEAQQ. Residue Lys-327 forms a Glycyl lysine isopeptide (Lys-Gly) (interchain with G-Cter in ubiquitin) linkage. The MATH domain occupies 358 to 507; the sequence is NGIYIWKIGN…DDTLLVRCEV (150 aa). Residues 363 to 530 form an interaction with TANK region; sequence WKIGNFGMHL…FQPRSTDAGV (168 aa). Residue Lys-461 forms a Glycyl lysine isopeptide (Lys-Gly) (interchain with G-Cter in SUMO) linkage.

Belongs to the TNF receptor-associated factor family. A subfamily. As to quaternary structure, homotrimer. Homooligomer. N-terminal region is dimeric while C-terminal region is trimeric; maybe providing a mode of oligomerization. Upon IL1B treatment, forms a complex with PELI1, IRAK1, IRAK4 and MYD88; this complex recruits MAP3K7/TAK1, TAB1 and TAB2 to mediate NF-kappa-B activation. Direct binding of SMAD6 to PELI1 prevents the complex formation and hence negatively regulates IL1R-TLR signaling and eventually NF-kappa-B-mediated gene expression. Binds to TNFRSF5/CD40 and TNFRSF11A/RANK. Associates with NGFR, TNFRSF17, IRAK2, IRAK3, PELI2, PELI3, RIPK2, MAP3K1, MAP3K5, MAP3K14, CSK, TRAF, TRAF-interacting protein TRIP and TNF receptor associated protein TDP2. Binds UBE2V1. Interacts with MAVS/IPS1. Interacts with TAX1BP1; this interaction mediates deubiquitination of TRAF6 and inhibition of NF-kappa-B activation. Interacts with IL17R. Interacts with SQSTM1 bridging NTRK1 and NGFR. Forms a ternary complex with SQSTM1 and PRKCZ. Interacts with IL1RL1. Interacts with AJUBA. Interacts with TRAFD1. Interacts with TICAM2. Interacts with ZFAND5. Interacts with ARRB1 and ARRB2. Interacts with MAP3K7 and TAB1/MAP3K7IP1; during IL-1 signaling. Interacts with UBE2N. Interacts with TGFBR1, HDAC1 and RANGAP1. Interacts with AKT1, AKT2 and AKT3. Interacts (via TRAF domains) with NUMBL (via C-terminal). Interacts (via TRAF domains) with DYNC2I2 (via WD domains). Interacts with RBCK1. Interacts with LIMD1 (via LIM domains). Interacts with RSAD2/viperin. Interacts with IFIT3 (via N-terminus). Interacts (via C-terminus) with EIF2AK2/PKR (via the kinase catalytic domain). Interacts with CARD14. Interacts with CD40 and MAP3K8; the interaction is required for ERK activation. Interacts with TICAM1 and this interaction is enhanced in the presence of WDFY1. Interacts with TANK; this interaction increases in response to DNA damage. Interacts with USP10; this interaction increases in response to DNA damage. Interacts with ZC3H12A; this interaction increases in response to DNA damage and is stimulated by TANK. Interacts with WDFY3. Interacts with TRIM13. Interacts with GPS2. Interacts (via C-terminus) with SASH1. Interacts with LRRC19. Interacts with IL17RA and TRAF3IP2. Interacts with TOMM70. Interacts with AMBRA1; interaction is required to mediate 'Lys-63'-linked ubiquitination of ULK1. Interacts with CRBN; this interaction inhibits TLR4-mediated signaling by preventing TRAF6-mediated ubiquitination of ECSIT. (Microbial infection) Interacts (via N-terminal RING domain) with Toxoplasma gondii GRA7; the interaction plays a role in GRA7-induced pro-inflammatory cytokine production in mouse macrophages. Sumoylated on Lys-124, Lys-142 and Lys-461 with SUMO1. In terms of processing, polyubiquitinated on Lys-124 by TRAF3IP2; after cell stimulation with IL17A. Polyubiquitinated; after cell stimulation with IL1B or TGFB. This ligand-induced cell stimulation leads to dimerization/oligomerization of TRAF6 molecules, followed by auto-ubiquitination which involves UBE2N and UBE2V1 and leads to TRAF6 activation. This 'Lys-63' site-specific poly-ubiquitination appears to be associated with the activation of signaling molecules. Endogenous autoubiquitination occurs only for the cytoplasmic form. Deubiquitinated by USP10 in a TANK-dependent manner, leading to the negative regulation of NF-kappa-B signaling upon DNA damage. LRRC19 induces 'Lys-63' ubiquitination. Ubiquitinated at Lys-327 by the SCF(FBXL2) complex, leading to its degradation by the proteasome. Highly expressed in brain, lung, liver, skeletal muscle, and kidney; lower expression in heart, spleen, and testis.

Its subcellular location is the cytoplasm. The protein resides in the cell cortex. It is found in the nucleus. The protein localises to the lipid droplet. It carries out the reaction S-ubiquitinyl-[E2 ubiquitin-conjugating enzyme]-L-cysteine + [acceptor protein]-L-lysine = [E2 ubiquitin-conjugating enzyme]-L-cysteine + N(6)-ubiquitinyl-[acceptor protein]-L-lysine.. Its pathway is protein modification; protein ubiquitination. In terms of biological role, E3 ubiquitin ligase that, together with UBE2N and UBE2V1, mediates the synthesis of 'Lys-63'-linked-polyubiquitin chains conjugated to proteins, such as ECSIT, IKBKG, IRAK1, AKT1 and AKT2. Also mediates ubiquitination of free/unanchored polyubiquitin chain that leads to MAP3K7 activation. Leads to the activation of NF-kappa-B and JUN. Seems to also play a role in dendritic cells (DCs) maturation and/or activation. Represses c-Myb-mediated transactivation, in B-lymphocytes. Adapter protein that seems to play a role in signal transduction initiated via TNF receptor, IL-1 receptor and IL-17 receptor. Regulates osteoclast differentiation by mediating the activation of adapter protein complex 1 (AP-1) and NF-kappa-B, in response to RANK-L stimulation. Together with MAP3K8, mediates CD40 signals that activate ERK in B-cells and macrophages, and thus may play a role in the regulation of immunoglobulin production. Acts as a regulator of the JNK and NF-kappa-B signaling pathways by initiating assembly of heterotypic 'Lys-63'-/'Lys-48'-linked branched ubiquitin chains that are then recognized by TAB2: TRAF6 catalyzes initial 'Lys-63'-linked-polyubiquitin chains that are then branched via 'Lys-48'-linked polyubiquitin by HUWE1. 'Lys-63'-/'Lys-48'-linked branched ubiquitin chains protect 'Lys-63'-linkages from CYLD deubiquitination. Also participates in the TCR signaling by ubiquitinating LAT. The sequence is that of TNF receptor-associated factor 6 (Traf6) from Mus musculus (Mouse).